The sequence spans 207 residues: Gene 66 protein (207 aa).

The chain is Gene 66 protein (66) from Mycobacterium (Mycobacteriophage L5).